Reading from the N-terminus, the 83-residue chain is EMBRYO SURROUNDING FACTOR 1.1 (83 aa).

A signal peptide spans 1–22 (MKSSHTSLICILMLSLVALHQC). Cystine bridges form between Cys41/Cys56, Cys46/Cys75, Cys54/Cys71, and Cys57/Cys64.

The protein belongs to the MEG family. In terms of tissue distribution, expressed exclusively in ovule embryo sacs and in early developing endosperms.

Functionally, maternally-contributed central cell peptide regulating suspensor development and correct auxin distribution in early developing embryos. This is EMBRYO SURROUNDING FACTOR 1.1 (ESF1.1) from Arabidopsis thaliana (Mouse-ear cress).